Here is an 89-residue protein sequence, read N- to C-terminus: Small ribosomal subunit protein uS15 (89 aa).

Belongs to the universal ribosomal protein uS15 family. In terms of assembly, part of the 30S ribosomal subunit. Forms a bridge to the 50S subunit in the 70S ribosome, contacting the 23S rRNA.

In terms of biological role, one of the primary rRNA binding proteins, it binds directly to 16S rRNA where it helps nucleate assembly of the platform of the 30S subunit by binding and bridging several RNA helices of the 16S rRNA. Forms an intersubunit bridge (bridge B4) with the 23S rRNA of the 50S subunit in the ribosome. This is Small ribosomal subunit protein uS15 from Buchnera aphidicola subsp. Cinara cedri (strain Cc).